A 314-amino-acid chain; its full sequence is Aspartate carbamoyltransferase catalytic subunit (314 aa).

Carbamoyl phosphate is bound by residues Arg-58 and Thr-59. An L-aspartate-binding site is contributed by Lys-86. The carbamoyl phosphate site is built by Arg-108, His-136, and Gln-139. L-aspartate contacts are provided by Arg-169 and Arg-223. Gly-264 and Pro-265 together coordinate carbamoyl phosphate.

The protein belongs to the aspartate/ornithine carbamoyltransferase superfamily. ATCase family. As to quaternary structure, heterododecamer (2C3:3R2) of six catalytic PyrB chains organized as two trimers (C3), and six regulatory PyrI chains organized as three dimers (R2).

It catalyses the reaction carbamoyl phosphate + L-aspartate = N-carbamoyl-L-aspartate + phosphate + H(+). The protein operates within pyrimidine metabolism; UMP biosynthesis via de novo pathway; (S)-dihydroorotate from bicarbonate: step 2/3. Its function is as follows. Catalyzes the condensation of carbamoyl phosphate and aspartate to form carbamoyl aspartate and inorganic phosphate, the committed step in the de novo pyrimidine nucleotide biosynthesis pathway. The sequence is that of Aspartate carbamoyltransferase catalytic subunit from Jannaschia sp. (strain CCS1).